The sequence spans 212 residues: Uridine kinase (212 aa).

Residue 13–20 (GGSGSGKT) coordinates ATP.

This sequence belongs to the uridine kinase family.

The protein localises to the cytoplasm. It catalyses the reaction uridine + ATP = UMP + ADP + H(+). It carries out the reaction cytidine + ATP = CMP + ADP + H(+). Its pathway is pyrimidine metabolism; CTP biosynthesis via salvage pathway; CTP from cytidine: step 1/3. It participates in pyrimidine metabolism; UMP biosynthesis via salvage pathway; UMP from uridine: step 1/1. The sequence is that of Uridine kinase from Bacillus cereus (strain B4264).